The chain runs to 81 residues: Beta-toxin Ct13 (81 aa).

Positions 1–18 (MKVLILIIASVLLIGVEC) are cleaved as a signal peptide. The 60-residue stretch at 19 to 78 (KDGFPVDSEGCILLPCATRAYCSVNCKFMKGSGGSCDTLACHCKGLPEDAKVQDKPTNKC) folds into the LCN-type CS-alpha/beta domain. 4 disulfide bridges follow: Cys-29–Cys-78, Cys-34–Cys-54, Cys-40–Cys-59, and Cys-44–Cys-61. Cys-78 carries the cysteine amide modification.

This sequence belongs to the long (4 C-C) scorpion toxin superfamily. Sodium channel inhibitor family. Beta subfamily. As to expression, expressed by the venom gland.

It localises to the secreted. Functionally, beta toxins bind voltage-independently at site-4 of sodium channels (Nav) and shift the voltage of activation toward more negative potentials thereby affecting sodium channel activation and promoting spontaneous and repetitive firing. The protein is Beta-toxin Ct13 of Centruroides tecomanus (Scorpion).